The primary structure comprises 1340 residues: Protein SHORT ROOT IN SALT MEDIUM 1 (1340 aa).

Disordered regions lie at residues 1–73 (MHRD…RSHL), 161–185 (YGEQ…ADPS), 357–473 (EEER…IRRS), 723–750 (TVEV…KKTV), 784–990 (PETT…PPRA), and 1063–1269 (RNQR…KREE). A compositionally biased stretch (low complexity) spans 7–39 (SSRGTGYGQQQYGSQSGYSQNLGSGYPGSSVSG). Residues 46-60 (QISLSSRHPSITGAP) show a composition bias toward polar residues. Basic and acidic residues-rich tracts occupy residues 173 to 182 (LQNEPTRRYA), 357 to 470 (EEER…EASI), and 723 to 735 (TVEV…KKSP). Residues 355–426 (LREEERRRED…RERKRALEIK (72 aa)) adopt a coiled-coil conformation. The segment covering 810–824 (GDTSDPSAKANEQTP) has biased composition (polar residues). The segment covering 828–840 (IVKKKIIKRVAKR) has biased composition (basic residues). Basic and acidic residues-rich tracts occupy residues 841 to 872 (KVAE…KKSS), 887 to 988 (EDVK…EEPP), 1069 to 1097 (HQEE…DKEA), and 1105 to 1138 (PGKD…ETLG). A coiled-coil region spans residues 1052–1086 (LKKLRVKIVRQRNQRKRHQEELSVKQNEAKSQDKR). Residues 1153-1204 (ENQDEEDDDGDDDPEEDPEEDPEEDPEEDPEEDPEECEEMDVANTEQEEPAE) are compositionally biased toward acidic residues. 2 stretches are compositionally biased toward basic and acidic residues: residues 1205–1214 (EPQKKEENLE) and 1229–1257 (TDNR…HGKQ). In terms of domain architecture, EF-hand spans 1270-1305 (TVDKELLQAFRFFDRNQAGYVRVEDMRVTIHSLGKF).

In terms of assembly, interacts with BHLH148/RITF1. As to expression, expressed ubiquitously at high levels, including in guard cells.

It is found in the nucleus. In terms of biological role, required for salt tolerance and sodium (Na) homeostasis after salt stress. Together with BHLH148/RITF1, regulates the transcription of several genes involved in the detoxification of reactive oxygen species (ROS) generated by salt (NaCl) stress. Binds calcium. The protein is Protein SHORT ROOT IN SALT MEDIUM 1 of Arabidopsis thaliana (Mouse-ear cress).